The chain runs to 161 residues: Nucleotide-binding protein Shewmr4_3156 (161 aa).

It belongs to the YajQ family.

Its function is as follows. Nucleotide-binding protein. The protein is Nucleotide-binding protein Shewmr4_3156 of Shewanella sp. (strain MR-4).